Reading from the N-terminus, the 302-residue chain is MTNISLDKLVTESRNENTKNIDRVETLEMLKMINDEDKKVAEAVEKELIHIAKAVEKIGKAFLNGGRLIYVGAGTSGRLGVLDASECPPTYGVSYDLVRGIIAGGESAMFKAREGAEDSKKLCIKDLKNIDFSKNDILVGIAASGRTPYVIGGLEYANGIGATTISVTCNPESEMSKIANISIAPVVGPEAITGSTRMKAGTAQKMVLNMLSTGAMVKTGKVYGNLMVDLKATNEKLVERAKRIVMQATGAKREQVERILEETNFDVKLSIFMIESSLEKMKAKEILDKNKGYIVEAIKEIS.

Positions 58 to 221 constitute an SIS domain; the sequence is IGKAFLNGGR…STGAMVKTGK (164 aa). E86 functions as the Proton donor in the catalytic mechanism. E117 is a catalytic residue.

The protein belongs to the GCKR-like family. MurNAc-6-P etherase subfamily. In terms of assembly, homodimer.

The catalysed reaction is N-acetyl-D-muramate 6-phosphate + H2O = N-acetyl-D-glucosamine 6-phosphate + (R)-lactate. Its pathway is amino-sugar metabolism; N-acetylmuramate degradation. In terms of biological role, specifically catalyzes the cleavage of the D-lactyl ether substituent of MurNAc 6-phosphate, producing GlcNAc 6-phosphate and D-lactate. This is N-acetylmuramic acid 6-phosphate etherase from Clostridium botulinum (strain Loch Maree / Type A3).